Here is a 171-residue protein sequence, read N- to C-terminus: Adenine phosphoribosyltransferase (171 aa).

This sequence belongs to the purine/pyrimidine phosphoribosyltransferase family. Homodimer.

It localises to the cytoplasm. The catalysed reaction is AMP + diphosphate = 5-phospho-alpha-D-ribose 1-diphosphate + adenine. It functions in the pathway purine metabolism; AMP biosynthesis via salvage pathway; AMP from adenine: step 1/1. Its function is as follows. Catalyzes a salvage reaction resulting in the formation of AMP, that is energically less costly than de novo synthesis. This chain is Adenine phosphoribosyltransferase, found in Pelotomaculum thermopropionicum (strain DSM 13744 / JCM 10971 / SI).